The following is a 133-amino-acid chain: Ribosomal RNA large subunit methyltransferase H 1 (133 aa).

Residues Ile-55, Gly-89, and 101-106 (ISPMEM) contribute to the S-adenosyl-L-methionine site.

It belongs to the RNA methyltransferase RlmH family. As to quaternary structure, homodimer.

The protein localises to the cytoplasm. The enzyme catalyses pseudouridine(1915) in 23S rRNA + S-adenosyl-L-methionine = N(3)-methylpseudouridine(1915) in 23S rRNA + S-adenosyl-L-homocysteine + H(+). In terms of biological role, specifically methylates the pseudouridine at position 1915 (m3Psi1915) in 23S rRNA. The protein is Ribosomal RNA large subunit methyltransferase H 1 of Thermoanaerobacter sp. (strain X514).